The primary structure comprises 309 residues: Taste receptor type 2 member 43 (309 aa).

Position 1 (methionine 1) is a topological domain, extracellular. Residues 2-22 (ITFLPIIFSSLVVVTFVIGNF) traverse the membrane as a helical segment. Residues 23 to 46 (ANGFIALVNSIEWFKRQKISFADQ) lie on the Cytoplasmic side of the membrane. The chain crosses the membrane as a helical span at residues 47–67 (ILTALAVSRVGLLWVLLLNWY). Residues 68–86 (STVLNPAFNSVEVRTTAYN) are Extracellular-facing. A helical transmembrane segment spans residues 87–107 (IWAVINHFSNWLATSLSIFYL). At 108–126 (LKIANFSNFIFLHLKRRVK) the chain is on the cytoplasmic side. The chain crosses the membrane as a helical span at residues 127-147 (SVILVMLLGPLLFLACHLFVI). Topologically, residues 148–178 (NMNEIVRTKEFEGNMTWKIKLKSAMYFSNMT) are extracellular. N-linked (GlcNAc...) asparagine glycans are attached at residues asparagine 161 and asparagine 176. The helical transmembrane segment at 179–199 (VTMVANLVPFTLTLLSFLLLI) threads the bilayer. The Cytoplasmic portion of the chain corresponds to 200–229 (CSLCKHLKKMQLHGKGSQDPSTKVHIKVLQ). Residues 230-250 (TVISFLLLCAIYFLSIMISVW) form a helical membrane-spanning segment. Residues 251–259 (SFGSLKNKP) are Extracellular-facing. A helical membrane pass occupies residues 260-280 (VFMFCKAMRFSYPSIHPFILI). Residues 281 to 309 (WGNKKLKQTFLSVFWQMRYWVKGEKTSSP) are Cytoplasmic-facing.

This sequence belongs to the G-protein coupled receptor T2R family.

Its subcellular location is the membrane. It localises to the cell projection. The protein localises to the cilium membrane. Gustducin-coupled receptor immplicated in the perception of bitter compounds in the oral cavity and the gastrointestinal tract. Signals through PLCB2 and the calcium-regulated cation channel TRPM5. Activated by the sulfonyl amide sweeteners saccharin and acesulfame K. In airway epithelial cells, binding of bitter compounds increases the intracellular calcium ion concentration and stimulates ciliary beat frequency. May act as chemosensory receptors in airway epithelial cells to detect and eliminate potential noxious agents from the airways. This chain is Taste receptor type 2 member 43 (TAS2R43), found in Pan troglodytes (Chimpanzee).